The chain runs to 103 residues: Small ribosomal subunit protein uS10 (103 aa).

Belongs to the universal ribosomal protein uS10 family. In terms of assembly, part of the 30S ribosomal subunit.

Involved in the binding of tRNA to the ribosomes. This is Small ribosomal subunit protein uS10 from Chromobacterium violaceum (strain ATCC 12472 / DSM 30191 / JCM 1249 / CCUG 213 / NBRC 12614 / NCIMB 9131 / NCTC 9757 / MK).